A 736-amino-acid polypeptide reads, in one-letter code: 1,4-alpha-glucan branching enzyme GlgB 2 (736 aa).

Asp-415 functions as the Nucleophile in the catalytic mechanism. Catalysis depends on Glu-468, which acts as the Proton donor.

This sequence belongs to the glycosyl hydrolase 13 family. GlgB subfamily. Monomer.

The enzyme catalyses Transfers a segment of a (1-&gt;4)-alpha-D-glucan chain to a primary hydroxy group in a similar glucan chain.. The protein operates within glycan biosynthesis; glycogen biosynthesis. Its function is as follows. Catalyzes the formation of the alpha-1,6-glucosidic linkages in glycogen by scission of a 1,4-alpha-linked oligosaccharide from growing alpha-1,4-glucan chains and the subsequent attachment of the oligosaccharide to the alpha-1,6 position. This is 1,4-alpha-glucan branching enzyme GlgB 2 from Rhizobium johnstonii (strain DSM 114642 / LMG 32736 / 3841) (Rhizobium leguminosarum bv. viciae).